The sequence spans 291 residues: T-cell leukemia homeobox protein 3 (291 aa).

The disordered stretch occupies residues Met1–Arg51. Residues Arg166 to Thr225 constitute a DNA-binding region (homeobox).

Its subcellular location is the nucleus. The protein is T-cell leukemia homeobox protein 3 (Tlx3) of Mus musculus (Mouse).